Here is a 227-residue protein sequence, read N- to C-terminus: Cytochrome c oxidase subunit 2 (227 aa).

Residues 1–14 (MAYPFQLGLQDATS) are Mitochondrial intermembrane-facing. Residues 15-45 (PIMEELTNFHDHTLMIVFLISSLVLYIISLM) traverse the membrane as a helical segment. At 46–59 (LTTKLTHTSTMDAQ) the chain is on the mitochondrial matrix side. A helical transmembrane segment spans residues 60–87 (EVETIWTILPAAILILIALPSLRILYMM). Residues 88–227 (DEINNPVLTV…YFENWSTSMI (140 aa)) are Mitochondrial intermembrane-facing. The Cu cation site is built by histidine 161, cysteine 196, glutamate 198, cysteine 200, histidine 204, and methionine 207. Glutamate 198 serves as a coordination point for Mg(2+). The residue at position 218 (tyrosine 218) is a Phosphotyrosine.

This sequence belongs to the cytochrome c oxidase subunit 2 family. Component of the cytochrome c oxidase (complex IV, CIV), a multisubunit enzyme composed of 14 subunits. The complex is composed of a catalytic core of 3 subunits MT-CO1, MT-CO2 and MT-CO3, encoded in the mitochondrial DNA, and 11 supernumerary subunits COX4I, COX5A, COX5B, COX6A, COX6B, COX6C, COX7A, COX7B, COX7C, COX8 and NDUFA4, which are encoded in the nuclear genome. The complex exists as a monomer or a dimer and forms supercomplexes (SCs) in the inner mitochondrial membrane with NADH-ubiquinone oxidoreductase (complex I, CI) and ubiquinol-cytochrome c oxidoreductase (cytochrome b-c1 complex, complex III, CIII), resulting in different assemblies (supercomplex SCI(1)III(2)IV(1) and megacomplex MCI(2)III(2)IV(2)). Found in a complex with TMEM177, COA6, COX18, COX20, SCO1 and SCO2. Interacts with TMEM177 in a COX20-dependent manner. Interacts with COX20. Interacts with COX16. Requires Cu cation as cofactor.

It localises to the mitochondrion inner membrane. The enzyme catalyses 4 Fe(II)-[cytochrome c] + O2 + 8 H(+)(in) = 4 Fe(III)-[cytochrome c] + 2 H2O + 4 H(+)(out). Its function is as follows. Component of the cytochrome c oxidase, the last enzyme in the mitochondrial electron transport chain which drives oxidative phosphorylation. The respiratory chain contains 3 multisubunit complexes succinate dehydrogenase (complex II, CII), ubiquinol-cytochrome c oxidoreductase (cytochrome b-c1 complex, complex III, CIII) and cytochrome c oxidase (complex IV, CIV), that cooperate to transfer electrons derived from NADH and succinate to molecular oxygen, creating an electrochemical gradient over the inner membrane that drives transmembrane transport and the ATP synthase. Cytochrome c oxidase is the component of the respiratory chain that catalyzes the reduction of oxygen to water. Electrons originating from reduced cytochrome c in the intermembrane space (IMS) are transferred via the dinuclear copper A center (CU(A)) of subunit 2 and heme A of subunit 1 to the active site in subunit 1, a binuclear center (BNC) formed by heme A3 and copper B (CU(B)). The BNC reduces molecular oxygen to 2 water molecules using 4 electrons from cytochrome c in the IMS and 4 protons from the mitochondrial matrix. The chain is Cytochrome c oxidase subunit 2 (MT-CO2) from Arvicanthis somalicus (Neumann's grass rat).